Consider the following 358-residue polypeptide: DNA replication and repair protein RecF (358 aa).

An ATP-binding site is contributed by 30–37; that stretch reads GANGSGKT.

The protein belongs to the RecF family.

It is found in the cytoplasm. Functionally, the RecF protein is involved in DNA metabolism; it is required for DNA replication and normal SOS inducibility. RecF binds preferentially to single-stranded, linear DNA. It also seems to bind ATP. This Edwardsiella ictaluri (strain 93-146) protein is DNA replication and repair protein RecF.